The sequence spans 654 residues: Threonine--tRNA ligase (654 aa).

Residues 1–63 form the TGS domain; it reads MASINVKFPD…TTDGSIEIIA (63 aa). Residues 248–546 are catalytic; sequence DHRVIGNELD…LTEIYKGAFP (299 aa). Residues Cys-342, His-393, and His-523 each coordinate Zn(2+).

This sequence belongs to the class-II aminoacyl-tRNA synthetase family. As to quaternary structure, homodimer. The cofactor is Zn(2+).

The protein resides in the cytoplasm. It catalyses the reaction tRNA(Thr) + L-threonine + ATP = L-threonyl-tRNA(Thr) + AMP + diphosphate + H(+). Its function is as follows. Catalyzes the attachment of threonine to tRNA(Thr) in a two-step reaction: L-threonine is first activated by ATP to form Thr-AMP and then transferred to the acceptor end of tRNA(Thr). Also edits incorrectly charged L-seryl-tRNA(Thr). The protein is Threonine--tRNA ligase of Lactiplantibacillus plantarum (strain ATCC BAA-793 / NCIMB 8826 / WCFS1) (Lactobacillus plantarum).